Reading from the N-terminus, the 431-residue chain is UDP-N-acetylmuramate--L-alanine ligase (431 aa).

Position 108 to 114 (108 to 114 (GAHGKST)) interacts with ATP.

The protein belongs to the MurCDEF family.

It localises to the cytoplasm. The catalysed reaction is UDP-N-acetyl-alpha-D-muramate + L-alanine + ATP = UDP-N-acetyl-alpha-D-muramoyl-L-alanine + ADP + phosphate + H(+). Its pathway is cell wall biogenesis; peptidoglycan biosynthesis. Functionally, cell wall formation. This is UDP-N-acetylmuramate--L-alanine ligase from Campylobacter jejuni subsp. jejuni serotype O:23/36 (strain 81-176).